A 319-amino-acid chain; its full sequence is Annexin A4 (319 aa).

Ala2 carries the post-translational modification N-acetylalanine. Phosphothreonine is present on Thr7. The residue at position 12 (Ser12) is a Phosphoserine. Annexin repeat units follow at residues 14-85 (FNAA…GMMT), 86-157 (PTVL…SLSA), 169-241 (ALMR…AIVK), and 245-316 (NKSA…ILCG). An N6-acetyllysine mark is found at Lys213, Lys293, and Lys300.

It belongs to the annexin family. Monomer. Binds to SFTPA1 in a Ca(2+)-dependent manner.

Its subcellular location is the zymogen granule membrane. In terms of biological role, may play a role in alveolar type II cells through interaction with the surfactant protein SFTPA1 (SP-A). This Bos taurus (Bovine) protein is Annexin A4 (ANXA4).